A 150-amino-acid polypeptide reads, in one-letter code: AN1-type zinc finger protein TMC1 (150 aa).

Residues 1-82 form a disordered region; sequence MSDINEIEIP…TKKTTKKKKK (82 aa). Residue S2 is modified to N-acetylserine. Positions 23–33 are enriched in basic and acidic residues; it reads DPMHEIEDKST. Residues S43 and S54 each carry the phosphoserine modification. A compositionally biased stretch (low complexity) spans 53 to 70; that stretch reads NSRSSSNSSVTSTGQSSR. Positions 71-82 are enriched in basic residues; it reads RVTKKTTKKKKK. The AN1-type zinc finger occupies 79–128; sequence KKKKNACYFDTCSSAASKFIGDCNFCKGHFCSKHRLMENHACNGLTSCKE. The Zn(2+) site is built by C85, C90, C101, C104, C109, H112, H118, and C120.

Its subcellular location is the nucleus. May have a role in protecting cells from metalloid-induced proteotoxicity. This chain is AN1-type zinc finger protein TMC1, found in Saccharomyces cerevisiae (strain ATCC 204508 / S288c) (Baker's yeast).